A 259-amino-acid chain; its full sequence is MITVISPAKNLDYTTPPATDKFTQPELLEHSEALMQVCRELTPAQIGSLMKISDKLSGLNAARFSEWAQPFTTENAKQAVLAFNGDVYGGLDASTLTANQLDYAQSHLRILSGLYGLLKPLDLMQAYRLEMGTKLENSRGKNLYEFWGSVIANKLNEVLKAEDAQYLVNLASNEYFKAVDKKALNAQIITPHFKDCKNGQYKVISFYAKKARGMMARYLIENKVTQLSQLKEFTVAGYYFSAEASVKELEPVFLRDEQS.

The protein belongs to the UPF0246 family.

The protein is UPF0246 protein PSHAa2558 of Pseudoalteromonas translucida (strain TAC 125).